A 265-amino-acid polypeptide reads, in one-letter code: 5'-nucleotidase SurE (265 aa).

Residues D8, D9, S39, and N96 each coordinate a divalent metal cation.

This sequence belongs to the SurE nucleotidase family. Requires a divalent metal cation as cofactor.

Its subcellular location is the cytoplasm. The enzyme catalyses a ribonucleoside 5'-phosphate + H2O = a ribonucleoside + phosphate. Its function is as follows. Nucleotidase that shows phosphatase activity on nucleoside 5'-monophosphates. The sequence is that of 5'-nucleotidase SurE from Rubrobacter xylanophilus (strain DSM 9941 / JCM 11954 / NBRC 16129 / PRD-1).